The chain runs to 321 residues: Phosphate acyltransferase (321 aa).

The protein belongs to the PlsX family. Homodimer. Probably interacts with PlsY.

It localises to the cytoplasm. The catalysed reaction is a fatty acyl-[ACP] + phosphate = an acyl phosphate + holo-[ACP]. The protein operates within lipid metabolism; phospholipid metabolism. Its function is as follows. Catalyzes the reversible formation of acyl-phosphate (acyl-PO(4)) from acyl-[acyl-carrier-protein] (acyl-ACP). This enzyme utilizes acyl-ACP as fatty acyl donor, but not acyl-CoA. The sequence is that of Phosphate acyltransferase from Chlamydia trachomatis serovar L2 (strain ATCC VR-902B / DSM 19102 / 434/Bu).